Consider the following 212-residue polypeptide: Phosphoenolpyruvate guanylyltransferase (212 aa).

The phosphoenolpyruvate site is built by threonine 139, glycine 155, and serine 158.

Belongs to the CofC family.

It carries out the reaction phosphoenolpyruvate + GTP + H(+) = enolpyruvoyl-2-diphospho-5'-guanosine + diphosphate. It participates in cofactor biosynthesis; coenzyme F420 biosynthesis. In terms of biological role, guanylyltransferase that catalyzes the activation of phosphoenolpyruvate (PEP) as enolpyruvoyl-2-diphospho-5'-guanosine, via the condensation of PEP with GTP. It is involved in the biosynthesis of coenzyme F420, a hydride carrier cofactor. In Streptomyces coelicolor (strain ATCC BAA-471 / A3(2) / M145), this protein is Phosphoenolpyruvate guanylyltransferase.